The sequence spans 209 residues: Uracil phosphoribosyltransferase (209 aa).

5-phospho-alpha-D-ribose 1-diphosphate contacts are provided by residues Arg79, Arg104, and 131–139 (DPMLATGGS). Residues Ile194 and 199-201 (GDA) contribute to the uracil site. Residue Asp200 participates in 5-phospho-alpha-D-ribose 1-diphosphate binding.

It belongs to the UPRTase family. Mg(2+) serves as cofactor.

The catalysed reaction is UMP + diphosphate = 5-phospho-alpha-D-ribose 1-diphosphate + uracil. Its pathway is pyrimidine metabolism; UMP biosynthesis via salvage pathway; UMP from uracil: step 1/1. Its activity is regulated as follows. Allosterically activated by GTP. Functionally, catalyzes the conversion of uracil and 5-phospho-alpha-D-ribose 1-diphosphate (PRPP) to UMP and diphosphate. This is Uracil phosphoribosyltransferase from Lacticaseibacillus paracasei (strain ATCC 334 / BCRC 17002 / CCUG 31169 / CIP 107868 / KCTC 3260 / NRRL B-441) (Lactobacillus paracasei).